Reading from the N-terminus, the 141-residue chain is Hemoglobin subunit alpha (141 aa).

A Globin domain is found at 1-141 (VLSANDKANV…VSTVLTSKYR (141 aa)). S3 carries the phosphoserine modification. An N6-succinyllysine mark is found at K7 and K11. An N6-acetyllysine; alternate modification is found at K16. K16 bears the N6-succinyllysine; alternate mark. Y24 is modified (phosphotyrosine). S35 carries the phosphoserine modification. Residue K40 is modified to N6-succinyllysine. S49 bears the Phosphoserine mark. H58 serves as a coordination point for O2. H87 lines the heme b pocket. S102 bears the Phosphoserine mark. T108 carries the post-translational modification Phosphothreonine. S124 and S131 each carry phosphoserine. A phosphothreonine mark is found at T134 and T137. The residue at position 138 (S138) is a Phosphoserine.

It belongs to the globin family. In terms of assembly, heterotetramer of two alpha chains and two beta chains. As to expression, red blood cells.

In terms of biological role, involved in oxygen transport from the lung to the various peripheral tissues. Functionally, hemopressin acts as an antagonist peptide of the cannabinoid receptor CNR1. Hemopressin-binding efficiently blocks cannabinoid receptor CNR1 and subsequent signaling. This Suncus murinus (Asian house shrew) protein is Hemoglobin subunit alpha (HBA).